The chain runs to 149 residues: Large ribosomal subunit protein bL9 (149 aa).

The protein belongs to the bacterial ribosomal protein bL9 family.

Functionally, binds to the 23S rRNA. The polypeptide is Large ribosomal subunit protein bL9 (Salinibacter ruber (strain DSM 13855 / M31)).